The sequence spans 194 residues: Imidazoleglycerol-phosphate dehydratase (194 aa).

It belongs to the imidazoleglycerol-phosphate dehydratase family.

It localises to the cytoplasm. The enzyme catalyses D-erythro-1-(imidazol-4-yl)glycerol 3-phosphate = 3-(imidazol-4-yl)-2-oxopropyl phosphate + H2O. It functions in the pathway amino-acid biosynthesis; L-histidine biosynthesis; L-histidine from 5-phospho-alpha-D-ribose 1-diphosphate: step 6/9. This chain is Imidazoleglycerol-phosphate dehydratase, found in Bacillus cereus (strain G9842).